The chain runs to 252 residues: MKWMIVEKAEELANVSYQLLKQEIVRHPEGLTIGLATGSSPLGVYEEWRKDRVDCRHVTTVNLDEYVGLSPDHPHSYHTFMQEHLFDAVDFKESYVPIGSTADPREESDRYEALVRQLGIDIQLLGIGSNGHIAFNEPGTPFDAKTHVTKLTESTRQANQRFFDRLEDVPTEAITMGIGTIMEAKKILLVASSERKAEAIRDMMEGPATTDCPATILQRHADVMVVLDEEAASLLSDEAKRTGRAAYTNFMK.

The active-site Proton acceptor; for enolization step is aspartate 64. Asparagine 130 (for ring-opening step) is an active-site residue. The active-site Proton acceptor; for ring-opening step is the histidine 132. Glutamate 137 (for ring-opening step) is an active-site residue.

The protein belongs to the glucosamine/galactosamine-6-phosphate isomerase family. NagB subfamily.

It carries out the reaction alpha-D-glucosamine 6-phosphate + H2O = beta-D-fructose 6-phosphate + NH4(+). Its pathway is amino-sugar metabolism; N-acetylneuraminate degradation; D-fructose 6-phosphate from N-acetylneuraminate: step 5/5. In terms of biological role, catalyzes the reversible isomerization-deamination of glucosamine 6-phosphate (GlcN6P) to form fructose 6-phosphate (Fru6P) and ammonium ion. This Exiguobacterium sibiricum (strain DSM 17290 / CCUG 55495 / CIP 109462 / JCM 13490 / 255-15) protein is Glucosamine-6-phosphate deaminase.